Here is a 43-residue protein sequence, read N- to C-terminus: Parvalbumin beta (43 aa).

EF-hand domains follow at residues Lys-1–Phe-20 and Leu-22–Lys-43. 7 residues coordinate Ca(2+): Asp-7, Asp-9, Ser-11, Phe-12, Glu-14, Glu-16, and Glu-37.

As to expression, detected in muscle and cutaneous mucus. In the skin, detected in cells in the basal region of the glandular epithelium of the dermal mucus glands (at protein level).

It is found in the cytoplasm. The protein localises to the secreted. Functionally, in muscle, parvalbumin is thought to be involved in relaxation after contraction. It binds two calcium ions. This is Parvalbumin beta from Rana temporaria (European common frog).